We begin with the raw amino-acid sequence, 242 residues long: tRNA pseudouridine synthase A (242 aa).

The active-site Nucleophile is the D51. Y107 provides a ligand contact to substrate.

It belongs to the tRNA pseudouridine synthase TruA family. Homodimer.

It catalyses the reaction uridine(38/39/40) in tRNA = pseudouridine(38/39/40) in tRNA. Its function is as follows. Formation of pseudouridine at positions 38, 39 and 40 in the anticodon stem and loop of transfer RNAs. The chain is tRNA pseudouridine synthase A from Helicobacter pylori (strain G27).